We begin with the raw amino-acid sequence, 234 residues long: Phosphoribosylaminoimidazole-succinocarboxamide synthase (234 aa).

Belongs to the SAICAR synthetase family.

It carries out the reaction 5-amino-1-(5-phospho-D-ribosyl)imidazole-4-carboxylate + L-aspartate + ATP = (2S)-2-[5-amino-1-(5-phospho-beta-D-ribosyl)imidazole-4-carboxamido]succinate + ADP + phosphate + 2 H(+). The protein operates within purine metabolism; IMP biosynthesis via de novo pathway; 5-amino-1-(5-phospho-D-ribosyl)imidazole-4-carboxamide from 5-amino-1-(5-phospho-D-ribosyl)imidazole-4-carboxylate: step 1/2. This is Phosphoribosylaminoimidazole-succinocarboxamide synthase (purC) from Pyrococcus abyssi (strain GE5 / Orsay).